Reading from the N-terminus, the 229-residue chain is 2-C-methyl-D-erythritol 4-phosphate cytidylyltransferase (229 aa).

Belongs to the IspD/TarI cytidylyltransferase family. IspD subfamily.

The catalysed reaction is 2-C-methyl-D-erythritol 4-phosphate + CTP + H(+) = 4-CDP-2-C-methyl-D-erythritol + diphosphate. It participates in isoprenoid biosynthesis; isopentenyl diphosphate biosynthesis via DXP pathway; isopentenyl diphosphate from 1-deoxy-D-xylulose 5-phosphate: step 2/6. Catalyzes the formation of 4-diphosphocytidyl-2-C-methyl-D-erythritol from CTP and 2-C-methyl-D-erythritol 4-phosphate (MEP). The protein is 2-C-methyl-D-erythritol 4-phosphate cytidylyltransferase of Neisseria gonorrhoeae (strain NCCP11945).